The chain runs to 713 residues: Glycine--tRNA ligase beta subunit (713 aa).

Belongs to the class-II aminoacyl-tRNA synthetase family. In terms of assembly, tetramer of two alpha and two beta subunits.

It localises to the cytoplasm. It carries out the reaction tRNA(Gly) + glycine + ATP = glycyl-tRNA(Gly) + AMP + diphosphate. This Picosynechococcus sp. (strain ATCC 27264 / PCC 7002 / PR-6) (Agmenellum quadruplicatum) protein is Glycine--tRNA ligase beta subunit.